The chain runs to 447 residues: Omega-6 fatty acid desaturase, chloroplastic (447 aa).

A chloroplast-targeting transit peptide spans 1–65 (MESAITISNH…TRRKSTLVQA (65 aa)). Residue Val-66 is modified to N-acetylvaline. The short motif at 171–175 (HDCAH) is the Histidine box-1 element. A Histidine box-2 motif is present at residues 207–211 (HDQHH). Positions 367-371 (HIPHH) match the Histidine box-3 motif.

It belongs to the fatty acid desaturase type 1 family.

It is found in the plastid. The protein resides in the chloroplast membrane. It catalyses the reaction a (9Z)-octadecenoyl-containing glycerolipid + 2 reduced [2Fe-2S]-[ferredoxin] + O2 + 2 H(+) = a (9Z,12Z)-octadecadienoyl-containing glycerolipid + 2 oxidized [2Fe-2S]-[ferredoxin] + 2 H2O. It functions in the pathway lipid metabolism; polyunsaturated fatty acid biosynthesis. Chloroplast omega-6 fatty acid desaturase introduces the second double bond in the biosynthesis of 16:3 and 18:3 fatty acids, important constituents of plant membranes. It is thought to use ferredoxin as an electron donor and to act on fatty acids esterified to galactolipids, sulfolipids and phosphatidylglycerol. This is Omega-6 fatty acid desaturase, chloroplastic from Spinacia oleracea (Spinach).